The chain runs to 405 residues: 4-hydroxy-3-methylbut-2-enyl diphosphate reductase (405 aa).

Residue Cys-66 participates in [4Fe-4S] cluster binding. His-96 serves as a coordination point for (2E)-4-hydroxy-3-methylbut-2-enyl diphosphate. His-96 is a dimethylallyl diphosphate binding site. An isopentenyl diphosphate-binding site is contributed by His-96. Residue Cys-157 participates in [4Fe-4S] cluster binding. (2E)-4-hydroxy-3-methylbut-2-enyl diphosphate is bound at residue His-185. Dimethylallyl diphosphate is bound at residue His-185. His-185 contributes to the isopentenyl diphosphate binding site. Catalysis depends on Glu-187, which acts as the Proton donor. Thr-250 is a binding site for (2E)-4-hydroxy-3-methylbut-2-enyl diphosphate. Cys-288 provides a ligand contact to [4Fe-4S] cluster. The (2E)-4-hydroxy-3-methylbut-2-enyl diphosphate site is built by Ser-317, Ser-318, Asn-319, and Ser-380. Dimethylallyl diphosphate-binding residues include Ser-317, Ser-318, Asn-319, and Ser-380. Residues Ser-317, Ser-318, Asn-319, and Ser-380 each contribute to the isopentenyl diphosphate site.

Belongs to the IspH family. [4Fe-4S] cluster is required as a cofactor.

It carries out the reaction isopentenyl diphosphate + 2 oxidized [2Fe-2S]-[ferredoxin] + H2O = (2E)-4-hydroxy-3-methylbut-2-enyl diphosphate + 2 reduced [2Fe-2S]-[ferredoxin] + 2 H(+). The catalysed reaction is dimethylallyl diphosphate + 2 oxidized [2Fe-2S]-[ferredoxin] + H2O = (2E)-4-hydroxy-3-methylbut-2-enyl diphosphate + 2 reduced [2Fe-2S]-[ferredoxin] + 2 H(+). It participates in isoprenoid biosynthesis; dimethylallyl diphosphate biosynthesis; dimethylallyl diphosphate from (2E)-4-hydroxy-3-methylbutenyl diphosphate: step 1/1. The protein operates within isoprenoid biosynthesis; isopentenyl diphosphate biosynthesis via DXP pathway; isopentenyl diphosphate from 1-deoxy-D-xylulose 5-phosphate: step 6/6. In terms of biological role, catalyzes the conversion of 1-hydroxy-2-methyl-2-(E)-butenyl 4-diphosphate (HMBPP) into a mixture of isopentenyl diphosphate (IPP) and dimethylallyl diphosphate (DMAPP). Acts in the terminal step of the DOXP/MEP pathway for isoprenoid precursor biosynthesis. In Prochlorococcus marinus (strain SARG / CCMP1375 / SS120), this protein is 4-hydroxy-3-methylbut-2-enyl diphosphate reductase.